A 32-amino-acid polypeptide reads, in one-letter code: Tail virion protein G7P (32 aa).

Residues 9-29 (LYQLIFNAGLVICFGLGVISG) form a helical membrane-spanning segment.

The protein belongs to the inovirus G7P protein family.

It localises to the virion. It is found in the host membrane. Functionally, may initiate with G9P the virion concomitant assembly-budding process, by interacting with the packaging signal of the viral genome. The assembly-budding takes place at the host inner membrane. In turn, G7P and G9P are present at the end of the filamentous virion that emerges first from the bacterial host. The polypeptide is Tail virion protein G7P (VII) (Escherichia phage If1 (Bacteriophage If1)).